Here is a 382-residue protein sequence, read N- to C-terminus: Heme A synthase (382 aa).

Helical transmembrane passes span 25 to 45 (GAVR…VAVG), 112 to 132 (LLGR…WARG), 141 to 161 (GLLG…IMVA), 176 to 196 (LALH…LAAG), 211 to 231 (VVAC…GLVA), 270 to 290 (LALV…VAIA), 303 to 323 (AAAG…GLGI), and 327 to 347 (LLHV…AVLI). Heme is bound at residue H277. H338 lines the heme pocket.

Belongs to the COX15/CtaA family. Type 2 subfamily. In terms of assembly, interacts with CtaB. Requires heme b as cofactor.

The protein resides in the cell membrane. The enzyme catalyses Fe(II)-heme o + 2 A + H2O = Fe(II)-heme a + 2 AH2. It functions in the pathway porphyrin-containing compound metabolism; heme A biosynthesis; heme A from heme O: step 1/1. Its function is as follows. Catalyzes the conversion of heme O to heme A by two successive hydroxylations of the methyl group at C8. The first hydroxylation forms heme I, the second hydroxylation results in an unstable dihydroxymethyl group, which spontaneously dehydrates, resulting in the formyl group of heme A. The chain is Heme A synthase from Methylorubrum extorquens (strain CM4 / NCIMB 13688) (Methylobacterium extorquens).